The sequence spans 69 residues: ATP synthase F(0) complex subunit 8 (69 aa).

A helical transmembrane segment spans residues 8–24 (TWLLTITLMILALFCIY). Lys-55 carries the N6-acetyllysine; alternate modification. The residue at position 55 (Lys-55) is an N6-succinyllysine; alternate. Residue Lys-58 is modified to N6-acetyllysine.

The protein belongs to the ATPase protein 8 family. As to quaternary structure, component of the ATP synthase complex composed at least of ATP5F1A/subunit alpha, ATP5F1B/subunit beta, ATP5MC1/subunit c (homooctomer), MT-ATP6/subunit a, MT-ATP8/subunit 8, ATP5ME/subunit e, ATP5MF/subunit f, ATP5MG/subunit g, ATP5MK/subunit k, ATP5MJ/subunit j, ATP5F1C/subunit gamma, ATP5F1D/subunit delta, ATP5F1E/subunit epsilon, ATP5PF/subunit F6, ATP5PB/subunit b, ATP5PD/subunit d, ATP5PO/subunit OSCP. ATP synthase complex consists of a soluble F(1) head domain (subunits alpha(3) and beta(3)) - the catalytic core - and a membrane F(0) domain - the membrane proton channel (subunits c, a, 8, e, f, g, k and j). These two domains are linked by a central stalk (subunits gamma, delta, and epsilon) rotating inside the F1 region and a stationary peripheral stalk (subunits F6, b, d, and OSCP). Interacts with PRICKLE3.

Its subcellular location is the mitochondrion membrane. Its function is as follows. Subunit 8, of the mitochondrial membrane ATP synthase complex (F(1)F(0) ATP synthase or Complex V) that produces ATP from ADP in the presence of a proton gradient across the membrane which is generated by electron transport complexes of the respiratory chain. ATP synthase complex consist of a soluble F(1) head domain - the catalytic core - and a membrane F(1) domain - the membrane proton channel. These two domains are linked by a central stalk rotating inside the F(1) region and a stationary peripheral stalk. During catalysis, ATP synthesis in the catalytic domain of F(1) is coupled via a rotary mechanism of the central stalk subunits to proton translocation. In vivo, can only synthesize ATP although its ATP hydrolase activity can be activated artificially in vitro. Part of the complex F(0) domain. The polypeptide is ATP synthase F(0) complex subunit 8 (Osphranter robustus (Wallaroo)).